The primary structure comprises 51 residues: Small ribosomal subunit protein eS31 (51 aa).

4 residues coordinate Zn(2+): Cys22, Cys25, Cys40, and Cys43. A C4-type zinc finger spans residues 22–43; that stretch reads CVRCSHGIFMADHGDRYACGRC.

The protein belongs to the eukaryotic ribosomal protein eS31 family. In terms of assembly, part of the 30S ribosomal subunit. Requires Zn(2+) as cofactor.

The chain is Small ribosomal subunit protein eS31 from Methanosphaera stadtmanae (strain ATCC 43021 / DSM 3091 / JCM 11832 / MCB-3).